The sequence spans 263 residues: Small ribosomal subunit protein eS4 (263 aa).

Residues 42 to 104 form the S4 RNA-binding domain; the sequence is LPLIIFLRNR…TGENFRLIYD (63 aa).

This sequence belongs to the eukaryotic ribosomal protein eS4 family.

The polypeptide is Small ribosomal subunit protein eS4 (RPS4) (Bos taurus (Bovine)).